The chain runs to 300 residues: F-box/LRR-repeat protein 15 (300 aa).

Met-1 is modified (N-acetylmethionine). The 48-residue stretch at 19–66 (LLDLPWEDVLLPHILSRVPLRQLLRLQRVSRAFRALVQLHLAGLRRFD) folds into the F-box domain. Positions 113–269 (NPQLRSVALA…EPSLSRLRKR (157 aa)) are interaction with SMURF1. LRR repeat units follow at residues 141–162 (RLQR…RGLA), 167–188 (ALEE…VYLA), 194–215 (GLRS…QELA), 220–241 (ELEH…RTLA), and 246–267 (ALRS…SRLR).

The protein belongs to the FBXL15 family. Part of the SCF (SKP1-CUL1-F-box) E3 ubiquitin-protein ligase complex SCF(FBXL15) composed of CUL1, SKP1, RBX1 and FBXL15.

The protein resides in the cytoplasm. The protein operates within protein modification; protein ubiquitination. In terms of biological role, substrate recognition component of a SCF (SKP1-CUL1-F-box protein) E3 ubiquitin-protein ligase complex which mediates the ubiquitination and subsequent proteasomal degradation of SMURF1, thereby acting as a positive regulator of the BMP signaling pathway. Required for dorsal/ventral pattern formation and bone mass maintenance. Also mediates ubiquitination of SMURF2 and WWP2. The protein is F-box/LRR-repeat protein 15 (FBXL15) of Canis lupus familiaris (Dog).